We begin with the raw amino-acid sequence, 289 residues long: Diaminopimelate epimerase (289 aa).

2 residues coordinate substrate: Asn-11 and Asn-78. Catalysis depends on Cys-87, which acts as the Proton donor. Substrate is bound by residues 88–89 (GN), Asn-163, Asn-199, and 217–218 (ER). The active-site Proton acceptor is the Cys-226. 227–228 (GT) contributes to the substrate binding site.

It belongs to the diaminopimelate epimerase family. As to quaternary structure, homodimer.

It is found in the cytoplasm. It carries out the reaction (2S,6S)-2,6-diaminopimelate = meso-2,6-diaminopimelate. The protein operates within amino-acid biosynthesis; L-lysine biosynthesis via DAP pathway; DL-2,6-diaminopimelate from LL-2,6-diaminopimelate: step 1/1. Functionally, catalyzes the stereoinversion of LL-2,6-diaminopimelate (L,L-DAP) to meso-diaminopimelate (meso-DAP), a precursor of L-lysine and an essential component of the bacterial peptidoglycan. The polypeptide is Diaminopimelate epimerase (Mycobacterium bovis (strain ATCC BAA-935 / AF2122/97)).